A 63-amino-acid chain; its full sequence is Short neurotoxin 2 (63 aa).

Cystine bridges form between Cys-3-Cys-21, Cys-15-Cys-39, Cys-43-Cys-49, and Cys-50-Cys-55.

This sequence belongs to the three-finger toxin family. Short-chain subfamily. Orphan group XVIII sub-subfamily. In terms of tissue distribution, expressed by the venom gland.

The protein resides in the secreted. Blocks both the muscle-twitch response to nerve stimulation and the response to exogenous acetylcholine. The sequence is that of Short neurotoxin 2 from Bungarus fasciatus (Banded krait).